Reading from the N-terminus, the 433-residue chain is Pseudopaline synthase (433 aa).

The helical transmembrane segment at 7-27 threads the bilayer; the sequence is SLGNVLLVGLGAVAIQVALDL. NAD(+) contacts are provided by residues 16 to 19, 39 to 40, and threonine 154; these read LGAV and NH. Histidine 219 acts as the Proton donor/acceptor in catalysis. Position 364 (glutamate 364) interacts with NAD(+).

This sequence belongs to the staphylopine dehydrogenase family. Homodimer. Interacts with CntL.

It localises to the cell membrane. The catalysed reaction is pseudopaline + NAD(+) + H2O = (2S)-2-amino-4-{[(1S)-1-carboxy-2-(1H-imidazol-4-yl)ethyl]amino}butanoate + 2-oxoglutarate + NADH + H(+). Its function is as follows. Catalyzes the NADH-dependent reductive condensation of alpha-ketoglutarate to the intermediate formed by the adjacently encoded enzyme CntL, namely (2S)-2-amino-4-{[(1S)-1-carboxy-2-(1H-imidazol-4-yl)ethyl]amino}butanoate, leading to the production of pseudopaline. This is the last step in the biosynthesis of the metallophore pseudopaline, which is involved in the acquisition of nickel and zinc, and thus enables bacterial growth inside the host, where metal access is limited. Therefore, this enzyme probably contributes to Pseudomonas virulence. Can use neither pyruvate nor NADPH in place of alpha-ketoglutarate and NADH, respectively. In Pseudomonas aeruginosa (strain UCBPP-PA14), this protein is Pseudopaline synthase.